The following is a 265-amino-acid chain: Putative 2-amino-3,7-dideoxy-D-threo-hept-6-ulosonate synthase 2 (265 aa).

Asp27 (proton acceptor) is an active-site residue. 1-deoxy-D-threo-hexo-2,5-diulose 6-phosphate contacts are provided by residues 27-31 and 147-149; these read DHGVS and YPR. Tyr147 serves as the catalytic Proton donor. Lys177 acts as the Schiff-base intermediate with substrate in catalysis. Residues 202 to 203 and 230 to 231 each bind 1-deoxy-D-threo-hexo-2,5-diulose 6-phosphate; these read GG and GR.

Belongs to the DeoC/FbaB aldolase family. ADHS subfamily. As to quaternary structure, homodecamer.

The enzyme catalyses 1-deoxy-D-threo-hexo-2,5-diulose 6-phosphate + L-aspartate 4-semialdehyde = 2,3-dioxopropyl phosphate + 2-amino-2,3,7-trideoxy-D-lyxo-hept-6-ulosonate. Functionally, catalyzes a transaldol reaction between 6-deoxy-5-ketofructose 1-phosphate (DKFP) and L-aspartate semialdehyde (ASA) with an elimination of hydroxypyruvaldehyde phosphate to yield 2-amino-3,7-dideoxy-D-threo-hept-6-ulosonate (ADH). Plays a key role in an alternative pathway of the biosynthesis of 3-dehydroquinate (DHQ), which is involved in the canonical pathway for the biosynthesis of aromatic amino acids. This chain is Putative 2-amino-3,7-dideoxy-D-threo-hept-6-ulosonate synthase 2, found in Archaeoglobus fulgidus (strain ATCC 49558 / DSM 4304 / JCM 9628 / NBRC 100126 / VC-16).